Here is a 212-residue protein sequence, read N- to C-terminus: Peptide methionine sulfoxide reductase MsrA (212 aa).

Residue C52 is part of the active site.

Belongs to the MsrA Met sulfoxide reductase family.

It catalyses the reaction L-methionyl-[protein] + [thioredoxin]-disulfide + H2O = L-methionyl-(S)-S-oxide-[protein] + [thioredoxin]-dithiol. The enzyme catalyses [thioredoxin]-disulfide + L-methionine + H2O = L-methionine (S)-S-oxide + [thioredoxin]-dithiol. Has an important function as a repair enzyme for proteins that have been inactivated by oxidation. Catalyzes the reversible oxidation-reduction of methionine sulfoxide in proteins to methionine. This chain is Peptide methionine sulfoxide reductase MsrA, found in Escherichia fergusonii (strain ATCC 35469 / DSM 13698 / CCUG 18766 / IAM 14443 / JCM 21226 / LMG 7866 / NBRC 102419 / NCTC 12128 / CDC 0568-73).